Consider the following 195-residue polypeptide: Imidazoleglycerol-phosphate dehydratase (195 aa).

Belongs to the imidazoleglycerol-phosphate dehydratase family.

It is found in the cytoplasm. The enzyme catalyses D-erythro-1-(imidazol-4-yl)glycerol 3-phosphate = 3-(imidazol-4-yl)-2-oxopropyl phosphate + H2O. The protein operates within amino-acid biosynthesis; L-histidine biosynthesis; L-histidine from 5-phospho-alpha-D-ribose 1-diphosphate: step 6/9. The sequence is that of Imidazoleglycerol-phosphate dehydratase from Burkholderia ambifaria (strain MC40-6).